The sequence spans 151 residues: Large ribosomal subunit protein bL9 (151 aa).

This sequence belongs to the bacterial ribosomal protein bL9 family.

Functionally, binds to the 23S rRNA. This is Large ribosomal subunit protein bL9 from Prochlorococcus marinus (strain MIT 9301).